The following is a 493-amino-acid chain: Telomere-binding protein subunit alpha (493 aa).

Residues 1–30 (MSSAKRSTSRVSKKKAAPAKDGAPKKREQS) are disordered. The span at 7–17 (STSRVSKKKAA) shows a compositional bias: basic residues.

Belongs to the telombin family. Heterodimer of an alpha and a beta subunit.

It localises to the nucleus. The protein resides in the chromosome. It is found in the telomere. Functionally, may function as protective capping of the single-stranded telomeric overhang. May also participate in telomere length regulation during DNA replication. The sequence is that of Telomere-binding protein subunit alpha (STY56V) from Stylonychia mytilus (Ciliate).